A 280-amino-acid polypeptide reads, in one-letter code: Urease accessory protein UreD 1 (280 aa).

Belongs to the UreD family. In terms of assembly, ureD, UreF and UreG form a complex that acts as a GTP-hydrolysis-dependent molecular chaperone, activating the urease apoprotein by helping to assemble the nickel containing metallocenter of UreC. The UreE protein probably delivers the nickel.

It localises to the cytoplasm. Functionally, required for maturation of urease via the functional incorporation of the urease nickel metallocenter. This Brucella canis (strain ATCC 23365 / NCTC 10854 / RM-666) protein is Urease accessory protein UreD 1.